Consider the following 33-residue polypeptide: MSDIN-like toxin proprotein 1 (33 aa).

The propeptide occupies 1–10 (MSDINATRLP). The cyclopeptide (Ile-Pro) cross-link spans 11–18 (IIWAPVVP). The propeptide occupies 19-33 (CISDDNDSTLTRGQR).

Belongs to the MSDIN fungal toxin family. In terms of processing, processed by the macrocyclase-peptidase enzyme POPB to yield a toxic cyclic octapeptide. POPB first removes 10 residues from the N-terminus. Conformational trapping of the remaining peptide forces the enzyme to release this intermediate rather than proceed to macrocyclization. The enzyme rebinds the remaining peptide in a different conformation and catalyzes macrocyclization of the N-terminal 8 residues.

Functionally, probable toxin that belongs to the MSDIN-like toxin family responsible for a large number of food poisoning cases and deaths. The chain is MSDIN-like toxin proprotein 1 from Amanita fuliginea (East Asian brown death cap).